Reading from the N-terminus, the 551-residue chain is Interleukin-2 receptor subunit beta (551 aa).

The first 26 residues, 1 to 26, serve as a signal peptide directing secretion; it reads MAAPALSWRLPLLILLLPLATPWASA. Over 27 to 240 the chain is Extracellular; sequence TVNGTSQFTC…TKPASLGKDT (214 aa). 3 N-linked (GlcNAc...) asparagine glycosylation sites follow: N29, N43, and N71. A disulfide bridge links C36 with C46. C74 and C86 form a disulfide bridge. Residues 134–234 form the Fibronectin type-III domain; sequence APISLQVVHV…QPLAFRTKPA (101 aa). N-linked (GlcNAc...) asparagine glycosylation occurs at N149. Positions 220–224 match the WSXWS motif motif; it reads WSPWS. Residues 241 to 265 form a helical membrane-spanning segment; sequence IPWLGHLLVGLSGAFGFIILVYLLI. Topologically, residues 266–551 are cytoplasmic; that stretch reads NCRNTGPWLK…LQGQDPTHLV (286 aa). The short motif at 278–286 is the Box 1 motif element; it reads LKCHTPDPS. Disordered regions lie at residues 393–412 and 433–476; these read DEGVAGAPTGSSPQPLQPLS and SLLG…GPPT.

This sequence belongs to the type I cytokine receptor family. Type 4 subfamily. Non-covalent dimer of an alpha and a beta subunit. IL2R exists in 3 different forms: a high affinity dimer, an intermediate affinity monomer (beta subunit), and a low affinity monomer (alpha subunit). The high and intermediate affinity forms also associate with a gamma subunit. Interacts with SHB upon interleukin stimulation.

The protein resides in the cell membrane. Its subcellular location is the cell surface. Its function is as follows. Receptor for interleukin-2. This beta subunit is involved in receptor mediated endocytosis and transduces the mitogenic signals of IL2. Probably in association with IL15RA, involved in the stimulation of neutrophil phagocytosis by IL15. This Pan troglodytes (Chimpanzee) protein is Interleukin-2 receptor subunit beta (IL2RB).